The sequence spans 426 residues: Cytochrome c biogenesis protein CcsB (426 aa).

A run of 3 helical transmembrane segments spans residues 14 to 34, 72 to 92, and 162 to 182; these read LKIAILLLLLIAISCAAGTLI, SFWFLFLLIWLGLALSVCSFR, and LGPILIHLGMILLMIGATYGS.

It belongs to the Ccs1/CcsB family. In terms of assembly, may interact with CcsA.

The protein localises to the cellular thylakoid membrane. Functionally, required during biogenesis of c-type cytochromes (cytochrome c6 and cytochrome f) at the step of heme attachment. This Prochlorococcus marinus (strain NATL1A) protein is Cytochrome c biogenesis protein CcsB.